A 314-amino-acid polypeptide reads, in one-letter code: Methionyl-tRNA formyltransferase (314 aa).

Ser112–Pro115 contributes to the (6S)-5,6,7,8-tetrahydrofolate binding site.

Belongs to the Fmt family.

The catalysed reaction is L-methionyl-tRNA(fMet) + (6R)-10-formyltetrahydrofolate = N-formyl-L-methionyl-tRNA(fMet) + (6S)-5,6,7,8-tetrahydrofolate + H(+). Functionally, attaches a formyl group to the free amino group of methionyl-tRNA(fMet). The formyl group appears to play a dual role in the initiator identity of N-formylmethionyl-tRNA by promoting its recognition by IF2 and preventing the misappropriation of this tRNA by the elongation apparatus. This chain is Methionyl-tRNA formyltransferase, found in Legionella pneumophila (strain Paris).